The primary structure comprises 201 residues: Dephospho-CoA kinase (201 aa).

The DPCK domain maps to 4–201 (AFFVTASIAC…VIQEISKGNM (198 aa)). An ATP-binding site is contributed by 12-17 (ACGKST).

The protein belongs to the CoaE family.

It is found in the cytoplasm. The enzyme catalyses 3'-dephospho-CoA + ATP = ADP + CoA + H(+). The protein operates within cofactor biosynthesis; coenzyme A biosynthesis; CoA from (R)-pantothenate: step 5/5. Its function is as follows. Catalyzes the phosphorylation of the 3'-hydroxyl group of dephosphocoenzyme A to form coenzyme A. The protein is Dephospho-CoA kinase of Campylobacter jejuni subsp. jejuni serotype O:2 (strain ATCC 700819 / NCTC 11168).